We begin with the raw amino-acid sequence, 108 residues long: Protein YcgL (108 aa).

Residues 12–96 (MFCVIYRSSK…PPEDLLKQHL (85 aa)) form the YcgL domain.

The protein is Protein YcgL of Escherichia coli O9:H4 (strain HS).